A 201-amino-acid polypeptide reads, in one-letter code: CASP-like protein 2A1 (201 aa).

The tract at residues 1-27 (MEKRDKGSSPMATMMGSRDENEDVENT) is disordered. Topologically, residues 1–30 (MEKRDKGSSPMATMMGSRDENEDVENTTRT) are cytoplasmic. A helical membrane pass occupies residues 31–51 (AETMLRLVPMALCVSALVVML). Residues 52–72 (KNTQTNDYGSLSYSDLGAFRY) are Extracellular-facing. A helical transmembrane segment spans residues 73–93 (LVHVNGICAGYSLLSAVIVAM). Topologically, residues 94–101 (PRASTMPR) are cytoplasmic. A helical transmembrane segment spans residues 102–122 (AWAFFLLDQVLTYVILAAGTV). Residues 123–152 (STEVLYLASKGDTTITWSEACVSFGGFCHK) lie on the Extracellular side of the membrane. A helical transmembrane segment spans residues 153–173 (ALISIVITFVVVICYAALSLL). Topologically, residues 174-201 (SSYKLFSKYDSPVLTYPGKGIEIATFHG) are cytoplasmic.

This sequence belongs to the Casparian strip membrane proteins (CASP) family. In terms of assembly, homodimer and heterodimers.

Its subcellular location is the cell membrane. This chain is CASP-like protein 2A1, found in Populus trichocarpa (Western balsam poplar).